We begin with the raw amino-acid sequence, 217 residues long: Sentrin-specific protease 8 (217 aa).

Methionine 1 is subject to N-acetylmethionine. The tract at residues 11-174 is protease; the sequence is SLLRQSDVSL…MYVICNTEAL (164 aa). Catalysis depends on residues histidine 102 and aspartate 119. The active-site Nucleophile is cysteine 163.

It belongs to the peptidase C48 family.

Its function is as follows. Protease that catalyzes two essential functions in the NEDD8 pathway: processing of full-length NEDD8 to its mature form and deconjugation of NEDD8 from targeted proteins such as cullins or p53. The polypeptide is Sentrin-specific protease 8 (Senp8) (Rattus norvegicus (Rat)).